We begin with the raw amino-acid sequence, 361 residues long: Ribosomal RNA large subunit methyltransferase M (361 aa).

S-adenosyl-L-methionine is bound by residues Ser187, 220 to 223 (CPGG), Asp239, Asp259, and Asp276. The Proton acceptor role is filled by Lys305.

The protein belongs to the class I-like SAM-binding methyltransferase superfamily. RNA methyltransferase RlmE family. RlmM subfamily. In terms of assembly, monomer.

The protein resides in the cytoplasm. The enzyme catalyses cytidine(2498) in 23S rRNA + S-adenosyl-L-methionine = 2'-O-methylcytidine(2498) in 23S rRNA + S-adenosyl-L-homocysteine + H(+). In terms of biological role, catalyzes the 2'-O-methylation at nucleotide C2498 in 23S rRNA. The protein is Ribosomal RNA large subunit methyltransferase M of Shewanella sp. (strain MR-4).